The following is a 1172-amino-acid chain: DNA-directed RNA polymerase subunit beta (1172 aa).

Belongs to the RNA polymerase beta chain family. The RNAP catalytic core consists of 2 alpha, 1 beta, 1 beta' and 1 omega subunit. When a sigma factor is associated with the core the holoenzyme is formed, which can initiate transcription.

It carries out the reaction RNA(n) + a ribonucleoside 5'-triphosphate = RNA(n+1) + diphosphate. In terms of biological role, DNA-dependent RNA polymerase catalyzes the transcription of DNA into RNA using the four ribonucleoside triphosphates as substrates. This chain is DNA-directed RNA polymerase subunit beta, found in Mycobacterium sp. (strain JLS).